A 353-amino-acid chain; its full sequence is Peroxidase 34 (353 aa).

A signal peptide spans 1–30; sequence MHFSSSSTSSTWTILITLGCLMLHASLSAA. Glutamine 31 is modified (pyrrolidone carboxylic acid). Intrachain disulfides connect cysteine 41–cysteine 121, cysteine 74–cysteine 79, cysteine 127–cysteine 331, and cysteine 207–cysteine 239. N-linked (GlcNAc...) asparagine glycosylation is present at asparagine 43. Catalysis depends on histidine 72, which acts as the Proton acceptor. Residues aspartate 73, valine 76, glycine 78, aspartate 80, and serine 82 each contribute to the Ca(2+) site. N-linked (GlcNAc...) asparagine glycosylation is present at asparagine 87. Proline 169 serves as a coordination point for substrate. Histidine 200 is a binding site for heme b. Threonine 201 contributes to the Ca(2+) binding site. Residues asparagine 216, asparagine 228, and asparagine 244 are each glycosylated (N-linked (GlcNAc...) asparagine). Ca(2+) is bound by residues aspartate 252, threonine 255, and aspartate 260. N-linked (GlcNAc...) asparagine glycosylation occurs at asparagine 285.

This sequence belongs to the peroxidase family. Classical plant (class III) peroxidase subfamily. It depends on heme b as a cofactor. Ca(2+) serves as cofactor. Preferentially expressed in roots, but also detected in flowers, leaves and stems.

The protein localises to the secreted. Its subcellular location is the vacuole. It carries out the reaction 2 a phenolic donor + H2O2 = 2 a phenolic radical donor + 2 H2O. Functionally, removal of H(2)O(2), oxidation of toxic reductants, biosynthesis and degradation of lignin, suberization, auxin catabolism, response to environmental stresses such as wounding, pathogen attack and oxidative stress. These functions might be dependent on each isozyme/isoform in each plant tissue. Its function is as follows. May be implicated in the systemic acquired resistance response via the salicylic acid signal transduction pathway. Exhibits a Ca(2+)-pectate binding affinity which could be interpreted in vivo as a specificity to interact with the pectic structure of the cell wall. The protein is Peroxidase 34 (PER34) of Arabidopsis thaliana (Mouse-ear cress).